The sequence spans 212 residues: Ependymin (212 aa).

Positions 1-20 are cleaved as a signal peptide; it reads MRLTGLLCVALWSASAVVLA. 3 N-linked (GlcNAc...) asparagine glycosylation sites follow: N69, N92, and N112.

This sequence belongs to the ependymin family. In terms of assembly, forms disulfide-linked dimers. In terms of processing, binds calcium through the terminal sialic acids. EPDs are synthesized in the meninx and secreted in the cerebrospinal fluid.

The protein resides in the secreted. Functionally, may play a role in neural plasticity. May be involved during axon regeneration. This chain is Ependymin (epd), found in Clupea harengus (Atlantic herring).